Reading from the N-terminus, the 194-residue chain is 3-isopropylmalate dehydratase small subunit (194 aa).

Belongs to the LeuD family. LeuD type 1 subfamily. In terms of assembly, heterodimer of LeuC and LeuD.

It carries out the reaction (2R,3S)-3-isopropylmalate = (2S)-2-isopropylmalate. It participates in amino-acid biosynthesis; L-leucine biosynthesis; L-leucine from 3-methyl-2-oxobutanoate: step 2/4. Functionally, catalyzes the isomerization between 2-isopropylmalate and 3-isopropylmalate, via the formation of 2-isopropylmaleate. In Leuconostoc mesenteroides subsp. mesenteroides (strain ATCC 8293 / DSM 20343 / BCRC 11652 / CCM 1803 / JCM 6124 / NCDO 523 / NBRC 100496 / NCIMB 8023 / NCTC 12954 / NRRL B-1118 / 37Y), this protein is 3-isopropylmalate dehydratase small subunit.